The following is a 359-amino-acid chain: 3-dehydroquinate synthase (359 aa).

NAD(+) is bound by residues 71–76 (DGEQHK), 105–109 (GVIGD), 129–130 (TT), K142, and K151. Residues E184, H247, and H264 each coordinate Zn(2+).

The protein belongs to the sugar phosphate cyclases superfamily. Dehydroquinate synthase family. The cofactor is NAD(+). It depends on Co(2+) as a cofactor. Zn(2+) is required as a cofactor.

The protein resides in the cytoplasm. The enzyme catalyses 7-phospho-2-dehydro-3-deoxy-D-arabino-heptonate = 3-dehydroquinate + phosphate. It participates in metabolic intermediate biosynthesis; chorismate biosynthesis; chorismate from D-erythrose 4-phosphate and phosphoenolpyruvate: step 2/7. Functionally, catalyzes the conversion of 3-deoxy-D-arabino-heptulosonate 7-phosphate (DAHP) to dehydroquinate (DHQ). The polypeptide is 3-dehydroquinate synthase (Chromobacterium violaceum (strain ATCC 12472 / DSM 30191 / JCM 1249 / CCUG 213 / NBRC 12614 / NCIMB 9131 / NCTC 9757 / MK)).